The following is an 80-amino-acid chain: Large ribosomal subunit protein uL24 (80 aa).

Belongs to the universal ribosomal protein uL24 family. Part of the 50S ribosomal subunit.

One of two assembly initiator proteins, it binds directly to the 5'-end of the 23S rRNA, where it nucleates assembly of the 50S subunit. In terms of biological role, one of the proteins that surrounds the polypeptide exit tunnel on the outside of the subunit. This Chlorobaculum tepidum (strain ATCC 49652 / DSM 12025 / NBRC 103806 / TLS) (Chlorobium tepidum) protein is Large ribosomal subunit protein uL24.